The sequence spans 610 residues: UvrABC system protein C (610 aa).

A GIY-YIG domain is found at 16–94 (SQPGVYRMYD…IQRYQPRYNV (79 aa)). The UVR domain maps to 204 to 239 (SQVIEGLIKRMEEASQALRFEEAARIRDQIHAVRQV).

This sequence belongs to the UvrC family. In terms of assembly, interacts with UvrB in an incision complex.

It is found in the cytoplasm. Its function is as follows. The UvrABC repair system catalyzes the recognition and processing of DNA lesions. UvrC both incises the 5' and 3' sides of the lesion. The N-terminal half is responsible for the 3' incision and the C-terminal half is responsible for the 5' incision. The protein is UvrABC system protein C of Proteus mirabilis (strain HI4320).